We begin with the raw amino-acid sequence, 456 residues long: Glycerol-3-phosphate acyltransferase 4 (456 aa).

The first 37 residues, 1–37 (MFLLLPFDSLIVSLLGISLTVLFTLLLVFIIVPAVFG), serve as a signal peptide directing secretion. Helical transmembrane passes span 156–176 (ISLR…CLLL) and 180–200 (IALA…VGYL). Asn247 carries an N-linked (GlcNAc...) asparagine glycan. The HXXXXD motif motif lies at 248 to 253 (HTSPID). Asn327, Asn328, and Asn362 each carry an N-linked (GlcNAc...) asparagine glycan.

Belongs to the 1-acyl-sn-glycerol-3-phosphate acyltransferase family.

The protein localises to the endoplasmic reticulum membrane. The enzyme catalyses sn-glycerol 3-phosphate + an acyl-CoA = a 1-acyl-sn-glycero-3-phosphate + CoA. It carries out the reaction dodecanoyl-CoA + sn-glycerol 3-phosphate = 1-dodecanoyl-sn-glycerol 3-phosphate + CoA. The catalysed reaction is sn-glycerol 3-phosphate + hexadecanoyl-CoA = 1-hexadecanoyl-sn-glycero-3-phosphate + CoA. It catalyses the reaction sn-glycerol 3-phosphate + octadecanoyl-CoA = 1-octadecanoyl-sn-glycero-3-phosphate + CoA. The enzyme catalyses sn-glycerol 3-phosphate + (9Z)-octadecenoyl-CoA = 1-(9Z-octadecenoyl)-sn-glycero-3-phosphate + CoA. It carries out the reaction (9Z,12Z)-octadecadienoyl-CoA + sn-glycerol 3-phosphate = 1-(9Z,12Z)-octadecadienoyl-sn-glycero-3-phosphate + CoA. It functions in the pathway phospholipid metabolism; CDP-diacylglycerol biosynthesis; CDP-diacylglycerol from sn-glycerol 3-phosphate: step 1/3. Converts glycerol-3-phosphate to 1-acyl-sn-glycerol-3-phosphate (lysophosphatidic acid or LPA) by incorporating an acyl moiety at the sn-1 position of the glycerol backbone. Active against both saturated and unsaturated long-chain fatty acyl-CoAs. Protects cells against lipotoxicity. In Bos taurus (Bovine), this protein is Glycerol-3-phosphate acyltransferase 4.